Reading from the N-terminus, the 91-residue chain is Alpha-latrotoxin associated low molecular weight protein SGV150-311 (91 aa).

The signal sequence occupies residues 1–18 (MNVLHFLILLMSVVSVFC).

Belongs to the arthropod CHH/MIH/GIH/VIH hormone family. Expressed by the venom gland.

The protein localises to the secreted. May increase the toxicity of alpha-latrotoxin and/or other venom components. Is non-toxic to mice and to the cockroach Periplaneta americana. In Steatoda grossa (False black widow), this protein is Alpha-latrotoxin associated low molecular weight protein SGV150-311.